The following is a 334-amino-acid chain: 3-ketodihydrosphingosine reductase (334 aa).

Residues 1 to 20 form the signal peptide; it reads MIIYILFSLLAAVIVHLVYK. Positions 36, 38, 39, 40, 62, 66, 100, and 101 each coordinate NADPH. The GXSXG motif lies at 36–40; that stretch reads GGSSG. S182 acts as the Proton donor in catalysis. The Proton acceptor role is filled by Y196. 2 residues coordinate NADP(+): Y196 and K200. K200 (lowers pKa of active site Tyr) is an active-site residue.

This sequence belongs to the short-chain dehydrogenases/reductases (SDR) family.

It is found in the endoplasmic reticulum. It carries out the reaction sphinganine + NADP(+) = 3-oxosphinganine + NADPH + H(+). Its pathway is lipid metabolism; sphingolipid metabolism. Catalyzes the reduction of 3'-oxosphinganine (3-ketodihydrosphingosine/KDS) to sphinganine (dihydrosphingosine/DHS), the second step of de novo sphingolipid biosynthesis. In Dictyostelium discoideum (Social amoeba), this protein is 3-ketodihydrosphingosine reductase (ksrA-1).